Reading from the N-terminus, the 313-residue chain is tRNA-cytidine(32) 2-sulfurtransferase (313 aa).

The PP-loop motif signature appears at 47 to 52 (SGGKDS). Residues Cys122, Cys125, and Cys213 each coordinate [4Fe-4S] cluster.

The protein belongs to the TtcA family. In terms of assembly, homodimer. The cofactor is Mg(2+). [4Fe-4S] cluster is required as a cofactor.

The protein resides in the cytoplasm. It carries out the reaction cytidine(32) in tRNA + S-sulfanyl-L-cysteinyl-[cysteine desulfurase] + AH2 + ATP = 2-thiocytidine(32) in tRNA + L-cysteinyl-[cysteine desulfurase] + A + AMP + diphosphate + H(+). The protein operates within tRNA modification. In terms of biological role, catalyzes the ATP-dependent 2-thiolation of cytidine in position 32 of tRNA, to form 2-thiocytidine (s(2)C32). The sulfur atoms are provided by the cysteine/cysteine desulfurase (IscS) system. This chain is tRNA-cytidine(32) 2-sulfurtransferase, found in Yersinia enterocolitica serotype O:8 / biotype 1B (strain NCTC 13174 / 8081).